Reading from the N-terminus, the 343-residue chain is Holliday junction branch migration complex subunit RuvB (343 aa).

The tract at residues 1-181 (MDRIIDSAAT…FGIVQRLEFY (181 aa)) is large ATPase domain (RuvB-L). Residues Ile20, Arg21, Gly62, Lys65, Thr66, Thr67, 128-130 (EDF), Arg171, Tyr181, and Arg218 each bind ATP. Residue Thr66 coordinates Mg(2+). A small ATPAse domain (RuvB-S) region spans residues 182 to 252 (SPEDLARIVR…VAQAAMQMLK (71 aa)). The head domain (RuvB-H) stretch occupies residues 255–343 (QGGFDELDRR…SAFTDPEDLF (89 aa)). Positions 291, 310, and 315 each coordinate DNA.

Belongs to the RuvB family. Homohexamer. Forms an RuvA(8)-RuvB(12)-Holliday junction (HJ) complex. HJ DNA is sandwiched between 2 RuvA tetramers; dsDNA enters through RuvA and exits via RuvB. An RuvB hexamer assembles on each DNA strand where it exits the tetramer. Each RuvB hexamer is contacted by two RuvA subunits (via domain III) on 2 adjacent RuvB subunits; this complex drives branch migration. In the full resolvosome a probable DNA-RuvA(4)-RuvB(12)-RuvC(2) complex forms which resolves the HJ.

Its subcellular location is the cytoplasm. It carries out the reaction ATP + H2O = ADP + phosphate + H(+). In terms of biological role, the RuvA-RuvB-RuvC complex processes Holliday junction (HJ) DNA during genetic recombination and DNA repair, while the RuvA-RuvB complex plays an important role in the rescue of blocked DNA replication forks via replication fork reversal (RFR). RuvA specifically binds to HJ cruciform DNA, conferring on it an open structure. The RuvB hexamer acts as an ATP-dependent pump, pulling dsDNA into and through the RuvAB complex. RuvB forms 2 homohexamers on either side of HJ DNA bound by 1 or 2 RuvA tetramers; 4 subunits per hexamer contact DNA at a time. Coordinated motions by a converter formed by DNA-disengaged RuvB subunits stimulates ATP hydrolysis and nucleotide exchange. Immobilization of the converter enables RuvB to convert the ATP-contained energy into a lever motion, pulling 2 nucleotides of DNA out of the RuvA tetramer per ATP hydrolyzed, thus driving DNA branch migration. The RuvB motors rotate together with the DNA substrate, which together with the progressing nucleotide cycle form the mechanistic basis for DNA recombination by continuous HJ branch migration. Branch migration allows RuvC to scan DNA until it finds its consensus sequence, where it cleaves and resolves cruciform DNA. This Xylella fastidiosa (strain Temecula1 / ATCC 700964) protein is Holliday junction branch migration complex subunit RuvB.